A 316-amino-acid chain; its full sequence is Putative phosphoribosylaminoimidazole-succinocarboxamide synthase 2 (316 aa).

Belongs to the SAICAR synthetase family.

It catalyses the reaction 5-amino-1-(5-phospho-D-ribosyl)imidazole-4-carboxylate + L-aspartate + ATP = (2S)-2-[5-amino-1-(5-phospho-beta-D-ribosyl)imidazole-4-carboxamido]succinate + ADP + phosphate + 2 H(+). The protein operates within purine metabolism; IMP biosynthesis via de novo pathway; 5-amino-1-(5-phospho-D-ribosyl)imidazole-4-carboxamide from 5-amino-1-(5-phospho-D-ribosyl)imidazole-4-carboxylate: step 1/2. This chain is Putative phosphoribosylaminoimidazole-succinocarboxamide synthase 2 (purC2), found in Agrobacterium fabrum (strain C58 / ATCC 33970) (Agrobacterium tumefaciens (strain C58)).